Consider the following 651-residue polypeptide: Nucleolin (651 aa).

Residues 1-11 (MVKLAKGAKTQ) are compositionally biased toward low complexity. The disordered stretch occupies residues 1 to 230 (MVKLAKGAKT…AKKTKTDTAS (230 aa)). Residues 26–45 (EDSEEEEDMEEDDSSDEEVE) are compositionally biased toward acidic residues. The segment covering 54–79 (KKTATPAKATPGKAATPGKKGATPAK) has biased composition (low complexity). Residues 89–101 (SEEEEDDSDEEAE) are compositionally biased toward acidic residues. Over residues 106–116 (IKNKPVAKKAV) the composition is skewed to basic residues. Acidic residues-rich tracts occupy residues 122–134 (SEEDDDDEDESEE), 155–168 (SEEEDDEESEDEPM), and 183–204 (AEEDDEEEDDDDEEDDDDEEEQ). Ser-155 carries the phosphoserine modification. Residues 219–228 (PEAKKTKTDT) show a composition bias toward basic and acidic residues. RRM domains follow at residues 233–309 (LSIF…KAMA), 325–399 (RTLF…FTGE), 415–488 (KVLV…FSQG), and 503–578 (KTLF…FAKP). The tract at residues 574 to 651 (DFAKPKGDSQ…GQGKKMRFDD (78 aa)) is disordered. Residues 585–644 (GGRGGFGRGGGFRGGRGGRGGGGGRGFGGRGGGRGRGGFGGRGGGGFRGGQGGGFRGGQG) show a composition bias toward gly residues.

The protein resides in the nucleus. The protein localises to the nucleolus. Functionally, nucleolin is the major nucleolar protein of growing eukaryotic cells. It is found associated with intranucleolar chromatin and pre-ribosomal particles. It induces chromatin decondensation by binding to histone H1. It is thought to play a role in pre-rRNA transcription and ribosome assembly. This Xenopus laevis (African clawed frog) protein is Nucleolin (ncl).